A 559-amino-acid chain; its full sequence is Polypeptide N-acetylgalactosaminyltransferase 1 (559 aa).

The Cytoplasmic portion of the chain corresponds to 1 to 8; sequence MRKFAYCK. A helical; Signal-anchor for type II membrane protein transmembrane segment spans residues 9-28; that stretch reads VVLATSLVWVLLDMFLLLYF. The Lumenal portion of the chain corresponds to 29 to 559; that stretch reads SECNKCEEKK…LRNVTLPEIF (531 aa). N95 carries N-linked (GlcNAc...) asparagine glycosylation. 5 disulfides stabilise this stretch: C106-C339, C330-C408, C442-C459, C482-C497, and C523-C540. The segment at 115–225 is catalytic subdomain A; it reads LPTTSVVIVF…VGWLEPLLAR (111 aa). Positions 156 and 186 each coordinate substrate. Mn(2+) contacts are provided by D209 and H211. The segment at 285–347 is catalytic subdomain B; the sequence is PVRTPTMAGG…TCSHVGHVFR (63 aa). A substrate-binding site is contributed by W316. H344 serves as a coordination point for Mn(2+). Substrate is bound by residues R347 and Y352. Residues 429 to 551 enclose the Ricin B-type lectin domain; sequence FSLGEIRNVE…GSRSQQWLLR (123 aa). N-linked (GlcNAc...) asparagine glycosylation occurs at N552.

This sequence belongs to the glycosyltransferase 2 family. GalNAc-T subfamily. Requires Mn(2+) as cofactor. Heart, brain, spleen, liver, skeletal muscle and kidney.

Its subcellular location is the golgi apparatus. It is found in the golgi stack membrane. The protein resides in the secreted. It catalyses the reaction L-seryl-[protein] + UDP-N-acetyl-alpha-D-galactosamine = a 3-O-[N-acetyl-alpha-D-galactosaminyl]-L-seryl-[protein] + UDP + H(+). The enzyme catalyses L-threonyl-[protein] + UDP-N-acetyl-alpha-D-galactosamine = a 3-O-[N-acetyl-alpha-D-galactosaminyl]-L-threonyl-[protein] + UDP + H(+). It functions in the pathway protein modification; protein glycosylation. In terms of biological role, catalyzes the initial reaction in O-linked oligosaccharide biosynthesis, the transfer of an N-acetyl-D-galactosamine residue to a serine or threonine residue on the protein receptor. Has a broad spectrum of substrates such as apomucin-, MUC5AC-, MUC1- and MUC2-derived peptides. This Rattus norvegicus (Rat) protein is Polypeptide N-acetylgalactosaminyltransferase 1.